Reading from the N-terminus, the 385-residue chain is Transcription termination factor 2, mitochondrial (385 aa).

A mitochondrion-targeting transit peptide spans 1–35 (MLWKLLLRSQSCRLCSFRKMRSPPKYRPFLACFTY).

This sequence belongs to the mTERF family. In terms of assembly, monomer. As to expression, expressed in skeletal muscle, heart, liver and pancreas.

The protein localises to the mitochondrion. The protein resides in the mitochondrion matrix. It localises to the mitochondrion nucleoid. Functionally, binds mitochondrial DNA and plays a role in the regulation of transcription of mitochondrial mRNA and rRNA species. The protein is Transcription termination factor 2, mitochondrial (MTERF2) of Homo sapiens (Human).